Here is a 970-residue protein sequence, read N- to C-terminus: m7GpppN-mRNA hydrolase (970 aa).

The Nudix hydrolase domain maps to 101 to 228 (KSIPVRGAAI…IKYYLINSMM (128 aa)). The residue at position 116 (serine 116) is a Phosphoserine. Positions 134–155 (GKISKDENDIDCCIREVKEEIG) match the Nudix box motif. Glutamate 149 and glutamate 153 together coordinate Mn(2+). Over residues 302–314 (QHLKEQSGEHNQQ) the composition is skewed to basic and acidic residues. Disordered stretches follow at residues 302-341 (QHLK…ANNK), 417-465 (AVSQ…PKLK), 501-520 (SSQK…NDSV), and 528-692 (YEDF…LSST). Residues 315–334 (KDQQSSFSSQQQPSIFPSLS) are compositionally biased toward low complexity. The residue at position 439 (serine 439) is a Phosphoserine. Over residues 528 to 539 (YEDFESSSDEEV) the composition is skewed to acidic residues. Over residues 560–576 (SEKDSRRSQKEKPRNDA) the composition is skewed to basic and acidic residues. The span at 577-590 (SKTNLNASAESNSV) shows a compositional bias: polar residues. A compositionally biased stretch (low complexity) spans 596 to 608 (KSSPSTQSKQNSS). Residues 625 to 637 (DAYEVFESSSDEE) show a composition bias toward acidic residues. At threonine 677 the chain carries Phosphothreonine. Residues 677–691 (TESNKSINETVGLSS) are compositionally biased toward polar residues. Serine 679, serine 682, serine 751, serine 771, serine 773, and serine 778 each carry phosphoserine. The tract at residues 831-867 (LKKNDSTGYPRTEGGPSSEMSTSMKRNDATNNQELDK) is disordered. Over residues 848-863 (SEMSTSMKRNDATNNQ) the composition is skewed to polar residues.

The protein belongs to the Nudix hydrolase family. DCP2 subfamily. As to quaternary structure, component of the decapping complex composed of DCP1 and DCP2. Interacts with mRNA, LSM2, LSM4 and LSM8. Interacts with EDC3. Mn(2+) serves as cofactor.

Its subcellular location is the cytoplasm. It localises to the P-body. The catalysed reaction is a 5'-end (N(7)-methyl 5'-triphosphoguanosine)-ribonucleoside in mRNA + H2O = N(7)-methyl-GDP + a 5'-end phospho-ribonucleoside in mRNA + 2 H(+). Functionally, catalytic component of the decapping complex necessary for the degradation of mRNAs, both in normal mRNA turnover and in nonsense-mediated mRNA decay. Removes the 7-methyl guanine cap structure from mRNA molecules, yielding a 5'-phosphorylated mRNA fragment and 7m-GDP. Decapping is the major pathway of mRNA degradation in yeast and occurs through deadenylation, decapping and subsequent 5' to 3' exonucleolytic decay of the transcript body. Blocks autophagy in nutrient-rich conditions by repressing the expression of ATG-related genes through degradation of their transcripts. The polypeptide is m7GpppN-mRNA hydrolase (Saccharomyces cerevisiae (strain ATCC 204508 / S288c) (Baker's yeast)).